A 436-amino-acid chain; its full sequence is Glutamyl-tRNA reductase (436 aa).

Substrate is bound by residues 49–52 (TCNR), serine 109, 114–116 (EGQ), and glutamine 120. Cysteine 50 serves as the catalytic Nucleophile. 198–203 (GAGRMS) lines the NADP(+) pocket.

Belongs to the glutamyl-tRNA reductase family. As to quaternary structure, homodimer.

It carries out the reaction (S)-4-amino-5-oxopentanoate + tRNA(Glu) + NADP(+) = L-glutamyl-tRNA(Glu) + NADPH + H(+). It functions in the pathway porphyrin-containing compound metabolism; protoporphyrin-IX biosynthesis; 5-aminolevulinate from L-glutamyl-tRNA(Glu): step 1/2. It participates in porphyrin-containing compound metabolism; chlorophyll biosynthesis. Catalyzes the NADPH-dependent reduction of glutamyl-tRNA(Glu) to glutamate 1-semialdehyde (GSA). In Prochlorococcus marinus (strain MIT 9301), this protein is Glutamyl-tRNA reductase.